The sequence spans 321 residues: Methionyl-tRNA formyltransferase (321 aa).

112–115 (SILP) is a binding site for (6S)-5,6,7,8-tetrahydrofolate.

It belongs to the Fmt family.

The enzyme catalyses L-methionyl-tRNA(fMet) + (6R)-10-formyltetrahydrofolate = N-formyl-L-methionyl-tRNA(fMet) + (6S)-5,6,7,8-tetrahydrofolate + H(+). Functionally, attaches a formyl group to the free amino group of methionyl-tRNA(fMet). The formyl group appears to play a dual role in the initiator identity of N-formylmethionyl-tRNA by promoting its recognition by IF2 and preventing the misappropriation of this tRNA by the elongation apparatus. This Shewanella pealeana (strain ATCC 700345 / ANG-SQ1) protein is Methionyl-tRNA formyltransferase.